A 1031-amino-acid polypeptide reads, in one-letter code: Ookinete maturation protein 1 (1031 aa).

3 disordered regions span residues 125–184 (HNEN…PELE), 340–405 (KEAE…DGMR), and 609–697 (DAEL…NDSI). Residues 141–168 (QKLKKKKKIKKGTKKKSINKISILKHKS) are compositionally biased toward basic residues. Over residues 171 to 180 (SFPSTQNENT) the composition is skewed to polar residues. The segment covering 340–357 (KEAEEEERKKNEDEHILE) has biased composition (basic and acidic residues). A compositionally biased stretch (polar residues) spans 377-394 (LGKSFKNNESFELNSPQK). Residues 581-646 (IDEENSVFVE…ETQMAGKEEK (66 aa)) adopt a coiled-coil conformation. Over residues 610–648 (AELRKDEEEDKSKNNEKDSKSEERDILETQMAGKEEKPV) the composition is skewed to basic and acidic residues. The segment covering 649 to 659 (LKKKKKNKGKQ) has biased composition (basic residues). The segment covering 660-686 (RNREGKGVVEKGYDAKREKKENEEKNK) has biased composition (basic and acidic residues).

Its function is as follows. In the mosquito vector midgut, plays a role in ookinete development. The protein is Ookinete maturation protein 1 of Plasmodium berghei (strain Anka).